The following is a 395-amino-acid chain: S-adenosylmethionine synthase (395 aa).

Residue His19 participates in ATP binding. Residue Asp21 coordinates Mg(2+). Glu47 is a binding site for K(+). L-methionine is bound by residues Glu60 and Gln103. Residues 103–113 (QSPDIAQGVNS) are flexible loop. ATP-binding positions include 170–172 (DNK), 236–237 (KF), Asp245, 251–252 (RK), Ala268, and Lys272. Position 245 (Asp245) interacts with L-methionine. Lys276 contributes to the L-methionine binding site.

It belongs to the AdoMet synthase family. Homotetramer; dimer of dimers. Mg(2+) is required as a cofactor. Requires K(+) as cofactor.

It is found in the cytoplasm. It catalyses the reaction L-methionine + ATP + H2O = S-adenosyl-L-methionine + phosphate + diphosphate. The protein operates within amino-acid biosynthesis; S-adenosyl-L-methionine biosynthesis; S-adenosyl-L-methionine from L-methionine: step 1/1. Catalyzes the formation of S-adenosylmethionine (AdoMet) from methionine and ATP. The overall synthetic reaction is composed of two sequential steps, AdoMet formation and the subsequent tripolyphosphate hydrolysis which occurs prior to release of AdoMet from the enzyme. This chain is S-adenosylmethionine synthase, found in Rhodopirellula baltica (strain DSM 10527 / NCIMB 13988 / SH1).